A 176-amino-acid polypeptide reads, in one-letter code: Large ribosomal subunit protein bL17m (176 aa).

The transit peptide at 1–8 (MRLSLAAA) directs the protein to the mitochondrion.

The protein belongs to the bacterial ribosomal protein bL17 family. In terms of assembly, component of the mitochondrial ribosome large subunit (39S) which comprises a 16S rRNA and about 50 distinct proteins.

The protein resides in the mitochondrion. This Rattus norvegicus (Rat) protein is Large ribosomal subunit protein bL17m (Mrpl17).